Reading from the N-terminus, the 84-residue chain is Cell division topological specificity factor (84 aa).

Belongs to the MinE family.

Its function is as follows. Prevents the cell division inhibition by proteins MinC and MinD at internal division sites while permitting inhibition at polar sites. This ensures cell division at the proper site by restricting the formation of a division septum at the midpoint of the long axis of the cell. The polypeptide is Cell division topological specificity factor (Paraburkholderia phytofirmans (strain DSM 17436 / LMG 22146 / PsJN) (Burkholderia phytofirmans)).